A 510-amino-acid polypeptide reads, in one-letter code: Cytochrome c-552 (510 aa).

The signal sequence occupies residues 1–50 (MVVFLFILYRQSDLKFKSMNGVIIVNTLKKRLFVATTMIWGLSVTLPVLA). H124 lines the heme c pocket. Residues C152, C155, and K156 each coordinate heme. 6 residues coordinate heme c: C190, C193, H194, C239, C242, and H243. The Ca(2+) site is built by E245, Y246, K291, and Q293. Residue Y246 participates in substrate binding. A substrate-binding site is contributed by H294. Heme c is bound by residues H305, C312, C315, H316, H331, C344, C347, H348, and H423.

It belongs to the cytochrome c-552 family. Ca(2+) is required as a cofactor. The cofactor is heme c.

Its subcellular location is the periplasm. It catalyses the reaction 6 Fe(III)-[cytochrome c] + NH4(+) + 2 H2O = 6 Fe(II)-[cytochrome c] + nitrite + 8 H(+). It participates in nitrogen metabolism; nitrate reduction (assimilation). Its function is as follows. Catalyzes the reduction of nitrite to ammonia, consuming six electrons in the process. The polypeptide is Cytochrome c-552 (Pasteurella multocida (strain Pm70)).